A 212-amino-acid chain; its full sequence is Thymidylate kinase (212 aa).

10–17 serves as a coordination point for ATP; sequence GIDGCGKT.

It belongs to the thymidylate kinase family.

It carries out the reaction dTMP + ATP = dTDP + ADP. In terms of biological role, phosphorylation of dTMP to form dTDP in both de novo and salvage pathways of dTTP synthesis. This chain is Thymidylate kinase, found in Prochlorococcus marinus (strain MIT 9301).